Consider the following 97-residue polypeptide: DNA-directed RNA polymerase subunit omega (97 aa).

The protein belongs to the RNA polymerase subunit omega family. As to quaternary structure, the RNAP catalytic core consists of 2 alpha, 1 beta, 1 beta' and 1 omega subunit. When a sigma factor is associated with the core the holoenzyme is formed, which can initiate transcription.

The enzyme catalyses RNA(n) + a ribonucleoside 5'-triphosphate = RNA(n+1) + diphosphate. Its function is as follows. Promotes RNA polymerase assembly. Latches the N- and C-terminal regions of the beta' subunit thereby facilitating its interaction with the beta and alpha subunits. The chain is DNA-directed RNA polymerase subunit omega from Coxiella burnetii (strain Dugway 5J108-111).